The sequence spans 551 residues: MGVQQQSELPSQTSAKYFSLREDVSTESLSDIDSQTDINNTGNSGKDYSSPPRLSLWGWYTPSQYRGNSSGVTMKNLSASEDSISLSSLDHQQQPMLMVDHSSNSDNEDGATAKDFKIDIHLKGEDEDDGSGDTRVKYNTRNSGTLRNSSNKTQTTVLNNSTTSSNNINNNNDKEINITTLGGSTNSTTKFLYSSVDQSNGSTIRYPYSPSYSDATFSILSGVVILFSIIYSLLVGPIQIMFAFLVSILVFISYICASFAANNRIYLYSITALAVGLGLTIPSFFAATGAVVLGTGRDKSTWDVELFKSDQVLMGWMWPKGQMAIFVDESTIIGPDSFIGKLSTEILQLSYISYYIWGYFMEIYILYNLWRCHLSKDPQQQKMMPIWDQRLKMFICSWISTYFIVFSINLIFPAVSPRVYIGKTLNLYNNTLEGFGFAGFVRSRIDNAAKGSFGSFPSGHIATSFAIGLSSYKILPAYGFVSTIAAILIAIATMYLRYHYFVDFLAALPVTIFCLLYGGFYTPSDFKNVFVNCFYSIKSIFQNILSKFNNK.

2 stretches are compositionally biased toward polar residues: residues 26–47 (TESL…SGKD) and 137–152 (KYNT…SSNK). Disordered regions lie at residues 26-50 (TESL…DYSS) and 123-172 (KGED…NNNN). The segment covering 153–171 (TQTTVLNNSTTSSNNINNN) has biased composition (low complexity). A run of 7 helical transmembrane segments spans residues 211-231 (SYSD…SIIY), 232-252 (SLLV…LVFI), 273-293 (LAVG…AVVL), 346-366 (ILQL…IYIL), 393-413 (MFIC…LIFP), 474-494 (ILPA…IATM), and 500-520 (YFVD…YGGF).

Belongs to the PA-phosphatase related phosphoesterase family.

It localises to the membrane. This is PA-phosphatase related-family protein DDB_G0268928 from Dictyostelium discoideum (Social amoeba).